Consider the following 662-residue polypeptide: DNA ligase (662 aa).

NAD(+) contacts are provided by residues 34 to 38 (DYEYD), 83 to 84 (SI), and Glu113. The active-site N6-AMP-lysine intermediate is the Lys115. Residues Arg136, Glu172, Lys286, and Lys310 each coordinate NAD(+). Positions 404, 407, 422, and 427 each coordinate Zn(2+). A BRCT domain is found at 583 to 662 (KSGSTCFGKA…EAFTNLIHLE (80 aa)).

It belongs to the NAD-dependent DNA ligase family. LigA subfamily. It depends on Mg(2+) as a cofactor. Mn(2+) serves as cofactor.

The enzyme catalyses NAD(+) + (deoxyribonucleotide)n-3'-hydroxyl + 5'-phospho-(deoxyribonucleotide)m = (deoxyribonucleotide)n+m + AMP + beta-nicotinamide D-nucleotide.. DNA ligase that catalyzes the formation of phosphodiester linkages between 5'-phosphoryl and 3'-hydroxyl groups in double-stranded DNA using NAD as a coenzyme and as the energy source for the reaction. It is essential for DNA replication and repair of damaged DNA. The protein is DNA ligase of Chlamydia pneumoniae (Chlamydophila pneumoniae).